We begin with the raw amino-acid sequence, 964 residues long: MYKALIFTVLLVSAVAPVRSLDPPLNDDVLGLIVFKADLRDPEQKLASWNEDDYTPCSWNGVKCHPRTNRVTELNLDGFSLSGRIGRGLLQLQFLHKLSLSNNNLTGIINPNMLLSLVNLKVVDLSSNGLSGSLPDEFFRQCGSLRVLSLAKNKLTGKIPVSISSCSSLAALNLSSNGFSGSMPLGIWSLNTLRSLDLSRNELEGEFPEKIDRLNNLRALDLSRNRLSGPIPSEIGSCMLLKTIDLSENSLSGSLPNTFQQLSLCYSLNLGKNALEGEVPKWIGEMRSLETLDLSMNKFSGQVPDSIGNLLALKVLNFSGNGLIGSLPVSTANCINLLALDLSGNSLTGKLPMWLFQDGSRDVSALKNDNSTGGIKKIQVLDLSHNAFSGEIGAGLGDLRDLEGLHLSRNSLTGPIPSTIGELKHLSVLDVSHNQLNGMIPRETGGAVSLEELRLENNLLEGNIPSSIKNCSSLRSLILSHNKLLGSIPPELAKLTRLEEVDLSFNELAGTLPKQLANLGYLHTFNISHNHLFGELPAGGIFNGLSPSSVSGNPGICGAVVNKSCPAISPKPIVLNPNATFDPYNGEIVPPGAGHKRILLSISSLIAISAAAAIVVGVIAITVLNLRVRASTVSRSAVPLTFSGGDDFSRSPTTDSNSGKLVMFSGEPDFSTGTHALLNKDCELGRGGFGAVYRTVIRDGYPVAIKKLTVSSLVKSQDEFEREVKKLGKLRHSNLVKLEGYYWTTSLQLLIYEFLSGGSLYKQLHEAPGGNSSLSWNDRFNIILGTAKCLAYLHQSNIIHYNIKSSNVLLDSSGEPKVGDYGLARLLPMLDRYVLSSKIQSALGYMAPEFACRTVKITEKCDVYGFGVLVLEVVTGKKPVEYMEDDVVVLCDMVREALEDGRADECIDPRLQGKFPVEEAVAVIKLGLICTSQVPSSRPHMGEAVNILRMIRCPSGSSDELGSS.

Residues 1–20 (MYKALIFTVLLVSAVAPVRS) form the signal peptide. Residues 21–603 (LDPPLNDDVL…GHKRILLSIS (583 aa)) are Extracellular-facing. LRR repeat units lie at residues 92 to 116 (LQFLHKLSLSNNNLTGIINPNMLLS), 117 to 141 (LVNLKVVDLSSNGLSGSLPDEFFRQ), 143 to 166 (GSLRVLSLAKNKLTGKIPVSISSC), 168 to 190 (SLAALNLSSNGFSGSMPLGIWSL), 191 to 214 (NTLRSLDLSRNELEGEFPEKIDRL), 215 to 238 (NNLRALDLSRNRLSGPIPSEIGSC), 240 to 261 (LLKTIDLSENSLSGSLPNTFQQ), 263 to 286 (SLCYSLNLGKNALEGEVPKWIGEM), 287 to 310 (RSLETLDLSMNKFSGQVPDSIGNL), 312 to 334 (ALKVLNFSGNGLIGSLPVSTANC), and 335 to 358 (INLLALDLSGNSLTGKLPMWLFQD). Asn104 is a glycosylation site (N-linked (GlcNAc...) asparagine). N-linked (GlcNAc...) asparagine glycosylation occurs at Asn173. Asn317 is a glycosylation site (N-linked (GlcNAc...) asparagine). An N-linked (GlcNAc...) asparagine glycan is attached at Asn370. LRR repeat units follow at residues 375 to 399 (IKKIQVLDLSHNAFSGEIGAGLGDL), 400 to 423 (RDLEGLHLSRNSLTGPIPSTIGEL), 425 to 447 (HLSVLDVSHNQLNGMIPRETGGA), 448 to 471 (VSLEELRLENNLLEGNIPSSIKNC), 472 to 495 (SSLRSLILSHNKLLGSIPPELAKL), 496 to 519 (TRLEEVDLSFNELAGTLPKQLANL), and 521 to 544 (YLHTFNISHNHLFGELPAGGIFNG). The N-linked (GlcNAc...) asparagine glycan is linked to Asn470. Asn526, Asn562, and Asn578 each carry an N-linked (GlcNAc...) asparagine glycan. The chain crosses the membrane as a helical span at residues 604–624 (SLIAISAAAAIVVGVIAITVL). At 625 to 964 (NLRVRASTVS…SGSSDELGSS (340 aa)) the chain is on the cytoplasmic side. One can recognise a Protein kinase domain in the interval 678–951 (LNKDCELGRG…GEAVNILRMI (274 aa)). ATP is bound by residues 684–692 (LGRGGFGAV) and Lys706.

This sequence belongs to the protein kinase superfamily. Ser/Thr protein kinase family. Interacts with IRKI. Autophosphorylated. As to expression, highly expressed in root tips, shoot apices and developing flowers.

The protein resides in the cell membrane. The enzyme catalyses L-seryl-[protein] + ATP = O-phospho-L-seryl-[protein] + ADP + H(+). It catalyses the reaction L-threonyl-[protein] + ATP = O-phospho-L-threonyl-[protein] + ADP + H(+). This Arabidopsis thaliana (Mouse-ear cress) protein is Probable LRR receptor-like serine/threonine-protein kinase IRK.